A 494-amino-acid chain; its full sequence is Glucose-6-phosphate 1-dehydrogenase (494 aa).

Residues Arg-46 and Lys-150 each coordinate NADP(+). The substrate site is built by His-180, Lys-184, Glu-218, and Asp-237. His-242 serves as the catalytic Proton acceptor. A substrate-binding site is contributed by Lys-342.

The protein belongs to the glucose-6-phosphate dehydrogenase family.

It carries out the reaction D-glucose 6-phosphate + NADP(+) = 6-phospho-D-glucono-1,5-lactone + NADPH + H(+). Its pathway is carbohydrate degradation; pentose phosphate pathway; D-ribulose 5-phosphate from D-glucose 6-phosphate (oxidative stage): step 1/3. Its function is as follows. Catalyzes the oxidation of glucose 6-phosphate to 6-phosphogluconolactone. This Aggregatibacter actinomycetemcomitans (Actinobacillus actinomycetemcomitans) protein is Glucose-6-phosphate 1-dehydrogenase.